Here is a 1173-residue protein sequence, read N- to C-terminus: DNA-directed RNA polymerase subunit beta (1173 aa).

Positions 1 to 23 (MEGSLLVASSTSNNETANTASTD) are disordered. Low complexity predominate over residues 8–22 (ASSTSNNETANTAST).

The protein belongs to the RNA polymerase beta chain family. As to quaternary structure, the RNAP catalytic core consists of 2 alpha, 1 beta, 1 beta' and 1 omega subunit. When a sigma factor is associated with the core the holoenzyme is formed, which can initiate transcription.

The catalysed reaction is RNA(n) + a ribonucleoside 5'-triphosphate = RNA(n+1) + diphosphate. Its function is as follows. DNA-dependent RNA polymerase catalyzes the transcription of DNA into RNA using the four ribonucleoside triphosphates as substrates. The protein is DNA-directed RNA polymerase subunit beta of Paenarthrobacter aurescens (strain TC1).